A 149-amino-acid chain; its full sequence is Endoribonuclease YbeY (149 aa).

Zn(2+) contacts are provided by His115, His119, and His125.

The protein belongs to the endoribonuclease YbeY family. It depends on Zn(2+) as a cofactor.

It is found in the cytoplasm. Single strand-specific metallo-endoribonuclease involved in late-stage 70S ribosome quality control and in maturation of the 3' terminus of the 16S rRNA. The protein is Endoribonuclease YbeY of Mycoplasmopsis pulmonis (strain UAB CTIP) (Mycoplasma pulmonis).